The chain runs to 185 residues: UPF0669 protein C6orf120 homolog (185 aa).

The first 23 residues, 1–23 (MATPWRRALLMILASQVVTLVKC), serve as a signal peptide directing secretion. The N-linked (GlcNAc...) asparagine glycan is linked to asparagine 47.

Belongs to the UPF0669 family.

Its subcellular location is the secreted. In terms of biological role, may be involved in induction of apoptosis in CD4(+) T-cells, but not CD8(+) T-cells or hepatocytes. The polypeptide is UPF0669 protein C6orf120 homolog (Mus musculus (Mouse)).